We begin with the raw amino-acid sequence, 247 residues long: O-methyltransferase imqG (247 aa).

S-adenosyl-L-methionine is bound by residues E84, 86–87, and A138; that span reads GT. Residues D163, D189, and N190 each contribute to the a divalent metal cation site. D163 is a substrate binding site.

It belongs to the class I-like SAM-binding methyltransferase superfamily. Cation-dependent O-methyltransferase family. CCoAMT subfamily. As to quaternary structure, homodimer. Requires a divalent metal cation as cofactor.

It functions in the pathway secondary metabolite biosynthesis. Functionally, O-methyltransferase; part of the gene cluster that mediates the biosynthesis of imizoquins A to D, tripeptide-derived alkaloids that serve a protective role against oxidative stress that are essential for normal germination. ImqB is a canonical three-module NRPS that assembles the tripeptide backbone of the imizoquins via condensation of Trp, Tyr, and Leu-derived precursors. N-methylation by imqF and phenol oxidation by imqC, followed by cyclization via the FAD-dependent oxidase imqH carry out the three-step transformation of L-tyrosine into tetrahydroisoquinoline. Importantly, this sequence requires the presence of a free amine in the tyrosine moiety, indicating that isoquinoline formation occurs prior to peptide bond formation. The imidazolidin-4-one ring of imizoquins could form following additional oxidation of the methyl-derived bridgehead carbon by imqH. Lastly, O-methylation by imqG and leucine hydroxylation by imqE complete biosynthesis of the imizoquins. The chain is O-methyltransferase imqG from Aspergillus flavus (strain ATCC 200026 / FGSC A1120 / IAM 13836 / NRRL 3357 / JCM 12722 / SRRC 167).